A 563-amino-acid chain; its full sequence is Urocanate hydratase (563 aa).

NAD(+) contacts are provided by residues 53-54 (GG), glutamine 131, 177-179 (GMG), glutamate 197, arginine 202, 243-244 (NA), 264-268 (QTSAH), 274-275 (YL), and tyrosine 323. Residue cysteine 411 is part of the active site. Glycine 493 is a binding site for NAD(+).

This sequence belongs to the urocanase family. NAD(+) is required as a cofactor.

The protein localises to the cytoplasm. The enzyme catalyses 4-imidazolone-5-propanoate = trans-urocanate + H2O. It participates in amino-acid degradation; L-histidine degradation into L-glutamate; N-formimidoyl-L-glutamate from L-histidine: step 2/3. Catalyzes the conversion of urocanate to 4-imidazolone-5-propionate. This Yersinia pestis bv. Antiqua (strain Antiqua) protein is Urocanate hydratase.